The sequence spans 302 residues: Ribosomal protein L11 methyltransferase (302 aa).

Residues threonine 155, glycine 176, aspartate 198, and asparagine 239 each coordinate S-adenosyl-L-methionine.

Belongs to the methyltransferase superfamily. PrmA family.

It localises to the cytoplasm. The catalysed reaction is L-lysyl-[protein] + 3 S-adenosyl-L-methionine = N(6),N(6),N(6)-trimethyl-L-lysyl-[protein] + 3 S-adenosyl-L-homocysteine + 3 H(+). In terms of biological role, methylates ribosomal protein L11. In Caldicellulosiruptor saccharolyticus (strain ATCC 43494 / DSM 8903 / Tp8T 6331), this protein is Ribosomal protein L11 methyltransferase.